We begin with the raw amino-acid sequence, 342 residues long: Muscleblind-like protein 3 (342 aa).

4 C3H1-type zinc fingers span residues 14–42, 48–74, 174–202, and 210–236; these read WLTL…HPPR, NGRV…HPPP, TDRL…HPTD, and DNSV…HPPP. Over residues 316-326 the composition is skewed to low complexity; sequence PSTVSTATPPA. Positions 316–342 are disordered; the sequence is PSTVSTATPPASNVPYVPTTTGNQLKY. A compositionally biased stretch (polar residues) spans 333–342; sequence PTTTGNQLKY.

The protein belongs to the muscleblind family.

Its subcellular location is the nucleus. The protein resides in the cytoplasm. Its function is as follows. Mediates pre-mRNA alternative splicing regulation. Acts either as activator or repressor of splicing on specific pre-mRNA targets. Inhibits cardiac troponin-T (TNNT2) pre-mRNA exon inclusion but induces insulin receptor (IR) pre-mRNA exon inclusion in muscle. Antagonizes the alternative splicing activity pattern of CELF proteins. Could inhibit terminal muscle differentiation, acting at approximately the time of myogenin induction. This Mus musculus (Mouse) protein is Muscleblind-like protein 3 (Mbnl3).